The sequence spans 462 residues: L-seryl-tRNA(Sec) selenium transferase (462 aa).

Lys-292 carries the post-translational modification N6-(pyridoxal phosphate)lysine.

The protein belongs to the SelA family. Requires pyridoxal 5'-phosphate as cofactor.

Its subcellular location is the cytoplasm. It catalyses the reaction L-seryl-tRNA(Sec) + selenophosphate + H(+) = L-selenocysteinyl-tRNA(Sec) + phosphate. It functions in the pathway aminoacyl-tRNA biosynthesis; selenocysteinyl-tRNA(Sec) biosynthesis; selenocysteinyl-tRNA(Sec) from L-seryl-tRNA(Sec) (bacterial route): step 1/1. Converts seryl-tRNA(Sec) to selenocysteinyl-tRNA(Sec) required for selenoprotein biosynthesis. The chain is L-seryl-tRNA(Sec) selenium transferase from Clostridium perfringens (strain 13 / Type A).